A 152-amino-acid polypeptide reads, in one-letter code: MTEYKKVIAQNKKALFNYFIEERLEAGIVLKGSEVQSLRQGKASIEESHAADTGHEVFLYNCHIAEYEKANRFNHATRRPRKLLLHTKEIKKIIGRIRIKGYTLVALSMYFNKKNKVKVELGIAKGKKLRDKRESIKEKNWKRDQSRLIRQK.

It belongs to the SmpB family.

It localises to the cytoplasm. In terms of biological role, required for rescue of stalled ribosomes mediated by trans-translation. Binds to transfer-messenger RNA (tmRNA), required for stable association of tmRNA with ribosomes. tmRNA and SmpB together mimic tRNA shape, replacing the anticodon stem-loop with SmpB. tmRNA is encoded by the ssrA gene; the 2 termini fold to resemble tRNA(Ala) and it encodes a 'tag peptide', a short internal open reading frame. During trans-translation Ala-aminoacylated tmRNA acts like a tRNA, entering the A-site of stalled ribosomes, displacing the stalled mRNA. The ribosome then switches to translate the ORF on the tmRNA; the nascent peptide is terminated with the 'tag peptide' encoded by the tmRNA and targeted for degradation. The ribosome is freed to recommence translation, which seems to be the essential function of trans-translation. The polypeptide is SsrA-binding protein (Rickettsia montanensis).